We begin with the raw amino-acid sequence, 167 residues long: Protein archease (167 aa).

Residue alanine 2 is modified to N-acetylalanine. Ca(2+) contacts are provided by aspartate 39, aspartate 166, and isoleucine 167.

This sequence belongs to the archease family. As to quaternary structure, component of the tRNA-splicing ligase complex.

Component of the tRNA-splicing ligase complex required to facilitate the enzymatic turnover of catalytic subunit RTCB. Together with DDX1, acts by facilitating the guanylylation of RTCB, a key intermediate step in tRNA ligation. This is Protein archease (ZBTB8OS) from Bos taurus (Bovine).